The following is a 1849-amino-acid chain: Mitogen-activated protein kinase kinase kinase mkh1 (1849 aa).

The Protein kinase domain occupies 1556-1825 (WFKGQLIGKG…TKLLAEHPFC (270 aa)). Residues 1562–1570 (IGKGTYGRV) and lysine 1585 each bind ATP. Aspartate 1686 (proton acceptor) is an active-site residue.

It belongs to the protein kinase superfamily. STE Ser/Thr protein kinase family. MAP kinase kinase kinase subfamily.

The enzyme catalyses L-seryl-[protein] + ATP = O-phospho-L-seryl-[protein] + ADP + H(+). It catalyses the reaction L-threonyl-[protein] + ATP = O-phospho-L-threonyl-[protein] + ADP + H(+). Functionally, mitogen-activated protein kinase kinase kinase, part of the mkh1-mkk1-spm1 MAPK cascade that regulates vegetative growth, conidial formation, colony surface hydrophobicity, osmotic stress, cell wall integrity maintenance, carbon and nitrogen source utilization, chitin distribution, septa formation, and pathogenicity. In Cytospora mali (Apple Valsa canker fungus), this protein is Mitogen-activated protein kinase kinase kinase mkh1.